A 158-amino-acid polypeptide reads, in one-letter code: Glutathione peroxidase homolog BsaA (158 aa).

Residue Cys36 is part of the active site.

This sequence belongs to the glutathione peroxidase family.

The protein is Glutathione peroxidase homolog BsaA (bsaA) of Staphylococcus aureus (strain COL).